Consider the following 241-residue polypeptide: Small ribosomal subunit protein eS4 (241 aa).

The 63-residue stretch at 37-99 (IPLGLLLRDY…ADLYLRIVPD (63 aa)) folds into the S4 RNA-binding domain.

Belongs to the eukaryotic ribosomal protein eS4 family.

This Metallosphaera sedula (strain ATCC 51363 / DSM 5348 / JCM 9185 / NBRC 15509 / TH2) protein is Small ribosomal subunit protein eS4.